Here is a 763-residue protein sequence, read N- to C-terminus: Amine oxidase [copper-containing] 3 (763 aa).

Over 1–5 the chain is Cytoplasmic; the sequence is MNQKT. A helical; Signal-anchor for type II membrane protein transmembrane segment spans residues 6–26; that stretch reads ILVLLILAVITIFALVCVLLV. At 27 to 763 the chain is on the extracellular side; the sequence is GRGGDGGEPS…AFSHGGFSHN (737 aa). S43 carries O-linked (GalNAc...) serine glycosylation. The N-linked (GlcNAc...) asparagine glycan is linked to N137. A disulfide bond links C198 and C199. O-linked (GalNAc...) threonine glycosylation is present at T212. Residues N232 and N294 are each glycosylated (N-linked (GlcNAc...) asparagine). D386 functions as the Proton acceptor in the catalytic mechanism. An intrachain disulfide couples C404 to C430. Y471 functions as the Schiff-base intermediate with substrate; via topaquinone in the catalytic mechanism. Y471 carries the 2',4',5'-topaquinone modification. The Cu(2+) site is built by H520 and H522. 4 residues coordinate Ca(2+): D529, L530, D531, and E572. N592 carries an N-linked (GlcNAc...) (complex) asparagine glycan. An N-linked (GlcNAc...) asparagine glycan is attached at N618. Residues E641, F663, and N665 each contribute to the Ca(2+) site. A glycan (N-linked (GlcNAc...) asparagine) is linked at N666. Ca(2+) contacts are provided by E667, D673, and L674. O-linked (GlcNAc) threonine glycosylation occurs at T679. H684 lines the Cu(2+) pocket. A disulfide bridge connects residues C734 and C741.

Belongs to the copper/topaquinone oxidase family. In terms of assembly, homodimer; disulfide-linked. Can heterodimerize with isoform 2 leading to reduced surface expression. Probably forms heterodimers with AOC2. The cofactor is Cu(2+). Ca(2+) serves as cofactor. Requires L-topaquinone as cofactor. Topaquinone (TPQ) is generated by copper-dependent autoxidation of a specific tyrosyl residue. In terms of processing, N- and O-glycosylated. In terms of tissue distribution, strongly expressed on the high endothelial venules of peripheral lymph nodes and on hepatic endothelia. Also highly expressed in appendix, lung and small intestine. Expressed also in adipose tissue, in bone marrow, colon, heart, kidney, ovary, pancreas, placenta, prostate, skeletal muscle, spleen and testis. Isoform 2 seems to be the predominant transcript in fetal kidneys, fetal cartilage and fetal tonsils. The highest relative expression of isoform 2 occurs in skeletal muscle, heart, pancreas, kidney, and lung.

It is found in the cell membrane. It catalyses the reaction methylamine + O2 + H2O = formaldehyde + H2O2 + NH4(+). It carries out the reaction benzylamine + O2 + H2O = benzaldehyde + H2O2 + NH4(+). The enzyme catalyses 2-phenylethylamine + O2 + H2O = 2-phenylacetaldehyde + H2O2 + NH4(+). Catalyzes the oxidative deamination of primary amines to the corresponding aldehydes with the concomitant production of hydrogen peroxide and ammonia. Has a preference for the primary monoamines methylamine and benzylamine. Could also act on 2-phenylethylamine but much less efficiently. At endothelial cells surface can also function as a cell adhesion protein that participates in lymphocyte extravasation and recirculation by mediating the binding of lymphocytes to peripheral lymph node vascular endothelial cells in an L-selectin-independent fashion. In terms of biological role, has no semicarbazide-sensitive amine oxidase (SSAO) activity. The chain is Amine oxidase [copper-containing] 3 from Homo sapiens (Human).